The following is a 426-amino-acid chain: Serine--tRNA ligase (426 aa).

231–233 contacts L-serine; sequence TAE. 262-264 provides a ligand contact to ATP; that stretch reads RSE. Position 285 (Glu-285) interacts with L-serine. ATP is bound at residue 349 to 352; that stretch reads EISS. Residue Ser-385 coordinates L-serine.

This sequence belongs to the class-II aminoacyl-tRNA synthetase family. Type-1 seryl-tRNA synthetase subfamily. In terms of assembly, homodimer. The tRNA molecule binds across the dimer.

The protein localises to the cytoplasm. It catalyses the reaction tRNA(Ser) + L-serine + ATP = L-seryl-tRNA(Ser) + AMP + diphosphate + H(+). The enzyme catalyses tRNA(Sec) + L-serine + ATP = L-seryl-tRNA(Sec) + AMP + diphosphate + H(+). It participates in aminoacyl-tRNA biosynthesis; selenocysteinyl-tRNA(Sec) biosynthesis; L-seryl-tRNA(Sec) from L-serine and tRNA(Sec): step 1/1. In terms of biological role, catalyzes the attachment of serine to tRNA(Ser). Is also able to aminoacylate tRNA(Sec) with serine, to form the misacylated tRNA L-seryl-tRNA(Sec), which will be further converted into selenocysteinyl-tRNA(Sec). The protein is Serine--tRNA ligase of Teredinibacter turnerae (strain ATCC 39867 / T7901).